Reading from the N-terminus, the 229-residue chain is Chloride conductance regulatory protein ICln (229 aa).

This sequence belongs to the pICln (TC 1.A.47) family. Homooligomer.

The protein localises to the cytoplasm. It localises to the nucleus. May participate in cellular volume control by activation of a swelling-induced chloride conductance pathway. The protein is Chloride conductance regulatory protein ICln of Arabidopsis thaliana (Mouse-ear cress).